Here is a 435-residue protein sequence, read N- to C-terminus: Nematode resistance protein-like HSPRO2 (435 aa).

As to quaternary structure, interacts with SNF4.

It localises to the cytoplasm. Its function is as follows. Positive regulator of basal resistance. This is Nematode resistance protein-like HSPRO2 (HSPRO2) from Arabidopsis thaliana (Mouse-ear cress).